We begin with the raw amino-acid sequence, 364 residues long: Phosphoserine aminotransferase (364 aa).

Arg-46 lines the L-glutamate pocket. Pyridoxal 5'-phosphate contacts are provided by residues 80–81 (AR), Trp-106, Thr-157, Asp-176, and Gln-199. Lys-200 carries the N6-(pyridoxal phosphate)lysine modification. 241–242 (NT) is a binding site for pyridoxal 5'-phosphate.

This sequence belongs to the class-V pyridoxal-phosphate-dependent aminotransferase family. SerC subfamily. Homodimer. Pyridoxal 5'-phosphate is required as a cofactor.

It localises to the cytoplasm. The catalysed reaction is O-phospho-L-serine + 2-oxoglutarate = 3-phosphooxypyruvate + L-glutamate. It catalyses the reaction 4-(phosphooxy)-L-threonine + 2-oxoglutarate = (R)-3-hydroxy-2-oxo-4-phosphooxybutanoate + L-glutamate. It functions in the pathway amino-acid biosynthesis; L-serine biosynthesis; L-serine from 3-phospho-D-glycerate: step 2/3. It participates in cofactor biosynthesis; pyridoxine 5'-phosphate biosynthesis; pyridoxine 5'-phosphate from D-erythrose 4-phosphate: step 3/5. Its function is as follows. Catalyzes the reversible conversion of 3-phosphohydroxypyruvate to phosphoserine and of 3-hydroxy-2-oxo-4-phosphonooxybutanoate to phosphohydroxythreonine. The sequence is that of Phosphoserine aminotransferase from Vibrio vulnificus (strain CMCP6).